Reading from the N-terminus, the 269-residue chain is Integral membrane protein 2C (269 aa).

The residue at position 39 (Thr39) is a Phosphothreonine. A helical; Signal-anchor for type II membrane protein membrane pass occupies residues 57-77 (VGGVCYLSMGMVVLLMGLVFA). The region spanning 138–232 (FGGGDPADII…LCNGKDTYRL (95 aa)) is the BRICHOS domain. Cys165 and Cys224 are joined by a disulfide. Residue Asn171 is glycosylated (N-linked (GlcNAc...) asparagine).

It belongs to the ITM2 family. In terms of assembly, interacts with BACE1. Interacts with APP. Interacts with STMN2. In terms of processing, type I membrane-bound, as well as soluble, furin has a pre-eminent role in ITM2C proteolytic processing. PCSK7 and PCSK5 may also be involved although to a lesser extent. The soluble form of PCSK7 is incapable of processing ITM2C. Fails to undergo shedding by ADAM10 and intramembrane cleavage by SPPL2B.

The protein localises to the lysosome membrane. Its subcellular location is the cell membrane. Its function is as follows. Negative regulator of amyloid-beta peptide production. May inhibit the processing of APP by blocking its access to alpha- and beta-secretase. Binding to the beta-secretase-cleaved APP C-terminal fragment is negligible, suggesting that ITM2C is a poor gamma-secretase cleavage inhibitor. May play a role in TNF-induced cell death and neuronal differentiation. The sequence is that of Integral membrane protein 2C (Itm2c) from Rattus norvegicus (Rat).